The following is a 233-amino-acid chain: MNAIQKEKAVVLLSGGLDSATAMAIAKDMGFQVYALSFSYGQRHTTELEAAKRVAKTLGAVEHQVANIDLTCFGGSALTADLDVPKGRAPEDMEKEIPVTYVPARNTIFLSFALAWAEVLETSHIFIGVNAVDYSGYPDCRPEYIQAFTAMANLATKAGVEGRTKIEIHTPLIDLTKAQIIQKGIALGVDYGLTHSCYDPSPEGLACGQCDSCLLRKKGFAEAGIPDPTKYIP.

Residue 13-23 participates in ATP binding; that stretch reads LSGGLDSATAM. 4 residues coordinate Zn(2+): cysteine 197, cysteine 207, cysteine 210, and cysteine 213.

It belongs to the QueC family. Zn(2+) serves as cofactor.

It catalyses the reaction 7-carboxy-7-deazaguanine + NH4(+) + ATP = 7-cyano-7-deazaguanine + ADP + phosphate + H2O + H(+). It functions in the pathway purine metabolism; 7-cyano-7-deazaguanine biosynthesis. Its function is as follows. Catalyzes the ATP-dependent conversion of 7-carboxy-7-deazaguanine (CDG) to 7-cyano-7-deazaguanine (preQ(0)). The protein is 7-cyano-7-deazaguanine synthase of Desulfatibacillum aliphaticivorans.